The sequence spans 526 residues: Hyaluronidase-5 (526 aa).

Residues Met1–Thr35 form the signal peptide. Intrachain disulfides connect Cys60-Cys351, Cys223-Cys237, Cys376-Cys387, Cys381-Cys435, and Cys437-Cys443. Residue Glu147 is the Proton donor of the active site. 2 N-linked (GlcNAc...) asparagine glycosylation sites follow: Asn165 and Asn179.

This sequence belongs to the glycosyl hydrolase 56 family. As to expression, expressed in testis, epididymal sperm and epididymides (at protein level). Expressed at highest levels in testis with lesser amounts in epididymal sperm.

The protein localises to the cell membrane. It is found in the cytoplasmic vesicle. Its subcellular location is the secretory vesicle. It localises to the acrosome membrane. The protein resides in the secreted. The enzyme catalyses Random hydrolysis of (1-&gt;4)-linkages between N-acetyl-beta-D-glucosamine and D-glucuronate residues in hyaluronate.. Functionally, catalyzes the hydrolysis of hyaluronan into smaller oligosaccharide fragments. Does not appear to be essential for fertilization. This chain is Hyaluronidase-5, found in Mus musculus (Mouse).